The primary structure comprises 45 residues: Large ribosomal subunit protein bL34 (45 aa).

This sequence belongs to the bacterial ribosomal protein bL34 family.

The sequence is that of Large ribosomal subunit protein bL34 from Salinispora arenicola (strain CNS-205).